Here is a 1111-residue protein sequence, read N- to C-terminus: Putative leucine--tRNA ligase, cytoplasmic (1111 aa).

The 'HIGH' region motif lies at 74-84 (PYMNGALHLGH). Position 460 is a phosphoserine (serine 460). Positions 737–741 (KMSKS) match the 'KMSKS' region motif. Lysine 740 lines the ATP pocket.

It belongs to the class-I aminoacyl-tRNA synthetase family.

It localises to the cytoplasm. The enzyme catalyses tRNA(Leu) + L-leucine + ATP = L-leucyl-tRNA(Leu) + AMP + diphosphate. This is Putative leucine--tRNA ligase, cytoplasmic (lrs1) from Schizosaccharomyces pombe (strain 972 / ATCC 24843) (Fission yeast).